A 200-amino-acid polypeptide reads, in one-letter code: Recombination protein RecR (200 aa).

The C4-type zinc finger occupies 57 to 72 (CSECRTFTEEDTCAIC). The Toprim domain maps to 81–176 (GELCIVESPA…SASRIAHGVP (96 aa)).

Belongs to the RecR family.

Its function is as follows. May play a role in DNA repair. It seems to be involved in an RecBC-independent recombinational process of DNA repair. It may act with RecF and RecO. The sequence is that of Recombination protein RecR from Aliivibrio salmonicida (strain LFI1238) (Vibrio salmonicida (strain LFI1238)).